Here is a 212-residue protein sequence, read N- to C-terminus: Ras-related protein Rab-17 (212 aa).

The residue at position 29 (S29) is a Phosphoserine. Positions 31, 32, 33, and 50 each coordinate GTP. Mg(2+) contacts are provided by S33, T50, and D73. Positions D43–A54 match the Switch 1 motif. A Switch 2 motif is present at residues A75–A91. GTP-binding residues include G76, N132, K133, D135, and A163. S-geranylgeranyl cysteine attachment occurs at residues C209 and C210.

This sequence belongs to the small GTPase superfamily. Rab family. Mg(2+) serves as cofactor. As to expression, expressed in melanocytes (at protein level).

The protein localises to the recycling endosome membrane. The protein resides in the melanosome. Its subcellular location is the cell projection. It is found in the dendrite. It catalyses the reaction GTP + H2O = GDP + phosphate + H(+). Its activity is regulated as follows. Regulated by guanine nucleotide exchange factors (GEFs) which promote the exchange of bound GDP for free GTP. Regulated by GTPase activating proteins (GAPs) which increase the GTP hydrolysis activity. Inhibited by GDP dissociation inhibitors (GDIs). Its function is as follows. The small GTPases Rab are key regulators of intracellular membrane trafficking, from the formation of transport vesicles to their fusion with membranes. Rabs cycle between an inactive GDP-bound form and an active GTP-bound form that is able to recruit to membranes different set of downstream effectors directly responsible for vesicle formation, movement, tethering and fusion. RAB17 is involved in transcytosis, the directed movement of endocytosed material through the cell and its exocytosis from the plasma membrane at the opposite side. Mainly observed in epithelial cells, transcytosis mediates for instance, the transcellular transport of immunoglobulins from the basolateral surface to the apical surface. Most probably controls membrane trafficking through apical recycling endosomes in a post-endocytic step of transcytosis. Required for melanosome transport and release from melanocytes, it also regulates dendrite and dendritic spine development. May also play a role in cell migration. The chain is Ras-related protein Rab-17 from Homo sapiens (Human).